Reading from the N-terminus, the 463-residue chain is MTSETRTLYSQLPAIDRLLHDSAFLSLRDRYGHTQVVDLLRRMLDDARDVIRNTQTLPDWYADWAQEAKLRLENAAQSALRPVINLTGTVLHTNLGRALQAQEAVEAVTQAMRAPVTLEYDLDGAGRGHRDRALATLLCRITGAEDACIVNNNAAAVLLMLAATASGKEVVVSRGELVEIGGAFRIPDVMRQAGCTLHEVGTTNRTHAKDYRQAVNENTGLLMKVHTSNYSIEGFTKTVEEAELAEIGRELDIPVVADLGSGSLVDLSQYGLPKEPMPQQLIAAGVSLVSFSGDKLLGGPQAGIIVGKKAMIAQLQSHPLKRALRADKMTLAALEATLRLYLHPEALAEKLPTLRLLTRSEASIREQAQRLQARLAARYGDEFALEVKPCLSQIGSGSLPVDRLPSAAMTFTPHDGRGSRLEALAARWRTLPVPVIGRIYDGRLWLDMRCLEDESRFMEMMLK.

Lys-295 is modified (N6-(pyridoxal phosphate)lysine).

The protein belongs to the SelA family. In terms of assembly, homodecamer; pentamer of dimers. Binds only one seryl-tRNA(Sec) per dimer. Pyridoxal 5'-phosphate serves as cofactor.

The protein resides in the cytoplasm. The catalysed reaction is L-seryl-tRNA(Sec) + selenophosphate + H(+) = L-selenocysteinyl-tRNA(Sec) + phosphate. It participates in aminoacyl-tRNA biosynthesis; selenocysteinyl-tRNA(Sec) biosynthesis; selenocysteinyl-tRNA(Sec) from L-seryl-tRNA(Sec) (bacterial route): step 1/1. Converts seryl-tRNA(Sec) to selenocysteinyl-tRNA(Sec) required for selenoprotein biosynthesis. This is L-seryl-tRNA(Sec) selenium transferase from Salmonella dublin (strain CT_02021853).